Consider the following 53-residue polypeptide: UPF0391 membrane protein TM1040_2720 (53 aa).

The next 2 membrane-spanning stretches (helical) occupy residues 4 to 24 (WALAFLVIALIAAVFGFGGIA) and 29 to 48 (GIAQILFFIFLVMFVVALIL).

Belongs to the UPF0391 family.

The protein localises to the cell membrane. This is UPF0391 membrane protein TM1040_2720 from Ruegeria sp. (strain TM1040) (Silicibacter sp.).